A 554-amino-acid polypeptide reads, in one-letter code: Dihydroxy-acid dehydratase (554 aa).

Cys48 serves as a coordination point for [2Fe-2S] cluster. Position 80 (Asp80) interacts with Mg(2+). Residue Cys121 participates in [2Fe-2S] cluster binding. Mg(2+) contacts are provided by Asp122 and Lys123. Lys123 is modified (N6-carboxylysine). Cys193 serves as a coordination point for [2Fe-2S] cluster. Glu444 is a binding site for Mg(2+). The active-site Proton acceptor is Ser470.

Belongs to the IlvD/Edd family. In terms of assembly, homodimer. It depends on [2Fe-2S] cluster as a cofactor. Mg(2+) serves as cofactor.

It carries out the reaction (2R)-2,3-dihydroxy-3-methylbutanoate = 3-methyl-2-oxobutanoate + H2O. The catalysed reaction is (2R,3R)-2,3-dihydroxy-3-methylpentanoate = (S)-3-methyl-2-oxopentanoate + H2O. Its pathway is amino-acid biosynthesis; L-isoleucine biosynthesis; L-isoleucine from 2-oxobutanoate: step 3/4. It functions in the pathway amino-acid biosynthesis; L-valine biosynthesis; L-valine from pyruvate: step 3/4. In terms of biological role, functions in the biosynthesis of branched-chain amino acids. Catalyzes the dehydration of (2R,3R)-2,3-dihydroxy-3-methylpentanoate (2,3-dihydroxy-3-methylvalerate) into 2-oxo-3-methylpentanoate (2-oxo-3-methylvalerate) and of (2R)-2,3-dihydroxy-3-methylbutanoate (2,3-dihydroxyisovalerate) into 2-oxo-3-methylbutanoate (2-oxoisovalerate), the penultimate precursor to L-isoleucine and L-valine, respectively. In Tremblaya princeps, this protein is Dihydroxy-acid dehydratase.